The sequence spans 634 residues: Probable potassium transport system protein Kup 1 (634 aa).

Transmembrane regions (helical) follow at residues 20 to 40, 64 to 84, 110 to 130, 148 to 168, 176 to 196, 224 to 244, 256 to 276, 290 to 310, 348 to 368, 377 to 397, 405 to 425, and 430 to 450; these read FLTL…TSPL, VMSL…VLLI, FAAI…DAII, PVFD…LFVV, VAAW…LGGI, AGLL…ALYA, FAWF…QGAM, FLFP…ATII, IYIP…VFAF, AYGI…YFVM, VATS…FLMA, and IFEG…VMIT.

This sequence belongs to the HAK/KUP transporter (TC 2.A.72) family.

The protein resides in the cell inner membrane. The catalysed reaction is K(+)(in) + H(+)(in) = K(+)(out) + H(+)(out). Functionally, transport of potassium into the cell. Likely operates as a K(+):H(+) symporter. The polypeptide is Probable potassium transport system protein Kup 1 (Rhodopseudomonas palustris (strain BisB5)).